The following is a 116-amino-acid chain: Phosphoribosyl-ATP pyrophosphatase (116 aa).

It belongs to the PRA-PH family.

It is found in the cytoplasm. The catalysed reaction is 1-(5-phospho-beta-D-ribosyl)-ATP + H2O = 1-(5-phospho-beta-D-ribosyl)-5'-AMP + diphosphate + H(+). It functions in the pathway amino-acid biosynthesis; L-histidine biosynthesis; L-histidine from 5-phospho-alpha-D-ribose 1-diphosphate: step 2/9. The chain is Phosphoribosyl-ATP pyrophosphatase from Nitrobacter winogradskyi (strain ATCC 25391 / DSM 10237 / CIP 104748 / NCIMB 11846 / Nb-255).